A 332-amino-acid chain; its full sequence is Ketol-acid reductoisomerase (NADP(+)) (332 aa).

Residues 2-182 (AKVYIDKDAS…GATRAGVIET (181 aa)) form the KARI N-terminal Rossmann domain. Residues 25–28 (YGSQ), Ser-53, and 83–86 (DMVQ) each bind NADP(+). His-108 is a catalytic residue. Gly-134 is an NADP(+) binding site. Residues 183–328 (TFKEETETDL…RQIREISLRG (146 aa)) form the KARI C-terminal knotted domain. Positions 191, 195, 227, and 231 each coordinate Mg(2+). Ser-252 contributes to the substrate binding site.

It belongs to the ketol-acid reductoisomerase family. Requires Mg(2+) as cofactor.

It catalyses the reaction (2R)-2,3-dihydroxy-3-methylbutanoate + NADP(+) = (2S)-2-acetolactate + NADPH + H(+). It carries out the reaction (2R,3R)-2,3-dihydroxy-3-methylpentanoate + NADP(+) = (S)-2-ethyl-2-hydroxy-3-oxobutanoate + NADPH + H(+). It participates in amino-acid biosynthesis; L-isoleucine biosynthesis; L-isoleucine from 2-oxobutanoate: step 2/4. It functions in the pathway amino-acid biosynthesis; L-valine biosynthesis; L-valine from pyruvate: step 2/4. In terms of biological role, involved in the biosynthesis of branched-chain amino acids (BCAA). Catalyzes an alkyl-migration followed by a ketol-acid reduction of (S)-2-acetolactate (S2AL) to yield (R)-2,3-dihydroxy-isovalerate. In the isomerase reaction, S2AL is rearranged via a Mg-dependent methyl migration to produce 3-hydroxy-3-methyl-2-ketobutyrate (HMKB). In the reductase reaction, this 2-ketoacid undergoes a metal-dependent reduction by NADPH to yield (R)-2,3-dihydroxy-isovalerate. The protein is Ketol-acid reductoisomerase (NADP(+)) of Sulfurisphaera tokodaii (strain DSM 16993 / JCM 10545 / NBRC 100140 / 7) (Sulfolobus tokodaii).